We begin with the raw amino-acid sequence, 959 residues long: Mitogen-activated protein kinase kinase kinase 13 (959 aa).

Positions 1-47 (MANPQEHLSCSSLPHLPLTENKTSGGRNELAAMGNHPSPKLPEDPQE) are disordered. Residues 7 to 18 (HLSCSSLPHLPL) are compositionally biased toward low complexity. One can recognise a Protein kinase domain in the interval 167–408 (ISELQWLGSG…FRQTLMHLDI (242 aa)). Residues 173–181 (LGSGAQGAV) and K194 contribute to the ATP site. The Proton acceptor role is filled by D278. Leucine-zipper regions lie at residues 432–453 (VKKH…DEEL) and 485–506 (LSAI…EQAV). Disordered stretches follow at residues 533 to 599 (KRKG…GSHS), 739 to 828 (GSLD…RQRP), 842 to 902 (SSEN…LSDK), and 927 to 959 (NPVQ…SATW). Positions 566 to 577 (SPLSGSPKMSTA) are enriched in polar residues. Over residues 581–593 (SRYRSKPRHRRGN) the composition is skewed to basic residues. Composition is skewed to polar residues over residues 754 to 774 (DLSS…SERT) and 780 to 790 (SGCQSGISHQF). Acidic residues predominate over residues 808–820 (DSSEEEGEVDSEV). Residues 866-876 (SANRRQDRLAE) show a composition bias toward basic and acidic residues. The span at 934 to 943 (SDCDSSEGEC) shows a compositional bias: acidic residues. Polar residues predominate over residues 947 to 959 (TVRTSKNYSSATW).

The protein belongs to the protein kinase superfamily. STE Ser/Thr protein kinase family. MAP kinase kinase kinase subfamily. Homodimer; forms dimers through the leucine-zipper motif. Interacts with the C-terminus of MAPK8IP1 through the kinase catalytic domain. Binds PRDX3. Associates with the IKK complex through the kinase domain. Requires Mg(2+) as cofactor. In terms of processing, autophosphorylated on serine and threonine residues.

The protein resides in the cytoplasm. It localises to the membrane. It carries out the reaction L-seryl-[protein] + ATP = O-phospho-L-seryl-[protein] + ADP + H(+). The catalysed reaction is L-threonyl-[protein] + ATP = O-phospho-L-threonyl-[protein] + ADP + H(+). With respect to regulation, activated by autophosphorylation and homodimerization. In terms of biological role, activates the JUN N-terminal pathway through activation of the MAP kinase kinase MAP2K7. Acts synergistically with PRDX3 to regulate the activation of NF-kappa-B in the cytosol. This activation is kinase-dependent and involves activating the IKK complex, the IKBKB-containing complex that phosphorylates inhibitors of NF-kappa-B. This chain is Mitogen-activated protein kinase kinase kinase 13 (Map3k13), found in Mus musculus (Mouse).